The sequence spans 421 residues: Eukaryotic translation initiation factor 3 subunit E (421 aa).

Residues 215-394 form the PCI domain; that stretch reads FFQNDTKGKD…STVILNHPSV (180 aa).

This sequence belongs to the eIF-3 subunit E family. As to quaternary structure, component of the eukaryotic translation initiation factor 3 (eIF-3) complex.

Its subcellular location is the cytoplasm. In terms of biological role, component of the eukaryotic translation initiation factor 3 (eIF-3) complex, which is involved in protein synthesis of a specialized repertoire of mRNAs and, together with other initiation factors, stimulates binding of mRNA and methionyl-tRNAi to the 40S ribosome. The eIF-3 complex specifically targets and initiates translation of a subset of mRNAs involved in cell proliferation. This is Eukaryotic translation initiation factor 3 subunit E from Yarrowia lipolytica (strain CLIB 122 / E 150) (Yeast).